We begin with the raw amino-acid sequence, 334 residues long: Holliday junction branch migration complex subunit RuvB (334 aa).

Residues 1 to 182 (MDKRMVDQEF…FGVHLRLEYY (182 aa)) are large ATPase domain (RuvB-L). ATP is bound by residues leucine 21, arginine 22, glycine 63, lysine 66, threonine 67, threonine 68, 129 to 131 (EDF), arginine 172, tyrosine 182, and arginine 219. Residue threonine 67 coordinates Mg(2+). Residues 183–253 (NENDLKEIIT…TTKRALQLLQ (71 aa)) are small ATPAse domain (RuvB-S). The interval 256–334 (QHGLDYIDHK…HFNTTNEKRE (79 aa)) is head domain (RuvB-H). Residues arginine 292, arginine 311, and arginine 316 each contribute to the DNA site.

The protein belongs to the RuvB family. Homohexamer. Forms an RuvA(8)-RuvB(12)-Holliday junction (HJ) complex. HJ DNA is sandwiched between 2 RuvA tetramers; dsDNA enters through RuvA and exits via RuvB. An RuvB hexamer assembles on each DNA strand where it exits the tetramer. Each RuvB hexamer is contacted by two RuvA subunits (via domain III) on 2 adjacent RuvB subunits; this complex drives branch migration. In the full resolvosome a probable DNA-RuvA(4)-RuvB(12)-RuvC(2) complex forms which resolves the HJ.

Its subcellular location is the cytoplasm. It catalyses the reaction ATP + H2O = ADP + phosphate + H(+). The RuvA-RuvB-RuvC complex processes Holliday junction (HJ) DNA during genetic recombination and DNA repair, while the RuvA-RuvB complex plays an important role in the rescue of blocked DNA replication forks via replication fork reversal (RFR). RuvA specifically binds to HJ cruciform DNA, conferring on it an open structure. The RuvB hexamer acts as an ATP-dependent pump, pulling dsDNA into and through the RuvAB complex. RuvB forms 2 homohexamers on either side of HJ DNA bound by 1 or 2 RuvA tetramers; 4 subunits per hexamer contact DNA at a time. Coordinated motions by a converter formed by DNA-disengaged RuvB subunits stimulates ATP hydrolysis and nucleotide exchange. Immobilization of the converter enables RuvB to convert the ATP-contained energy into a lever motion, pulling 2 nucleotides of DNA out of the RuvA tetramer per ATP hydrolyzed, thus driving DNA branch migration. The RuvB motors rotate together with the DNA substrate, which together with the progressing nucleotide cycle form the mechanistic basis for DNA recombination by continuous HJ branch migration. Branch migration allows RuvC to scan DNA until it finds its consensus sequence, where it cleaves and resolves cruciform DNA. The protein is Holliday junction branch migration complex subunit RuvB of Staphylococcus epidermidis (strain ATCC 35984 / DSM 28319 / BCRC 17069 / CCUG 31568 / BM 3577 / RP62A).